Here is a 682-residue protein sequence, read N- to C-terminus: DNA ligase (682 aa).

Residues 42–46, 91–92, and Glu124 each bind NAD(+); these read DAEYD and SL. Lys126 serves as the catalytic N6-AMP-lysine intermediate. Arg147, Glu184, Lys302, and Lys326 together coordinate NAD(+). The Zn(2+) site is built by Cys420, Cys423, Cys438, and Cys444. A BRCT domain is found at 603-682; it reads IADNPLKGKS…QEFIALTGEN (80 aa).

It belongs to the NAD-dependent DNA ligase family. LigA subfamily. The cofactor is Mg(2+). Mn(2+) serves as cofactor.

It carries out the reaction NAD(+) + (deoxyribonucleotide)n-3'-hydroxyl + 5'-phospho-(deoxyribonucleotide)m = (deoxyribonucleotide)n+m + AMP + beta-nicotinamide D-nucleotide.. DNA ligase that catalyzes the formation of phosphodiester linkages between 5'-phosphoryl and 3'-hydroxyl groups in double-stranded DNA using NAD as a coenzyme and as the energy source for the reaction. It is essential for DNA replication and repair of damaged DNA. This Actinobacillus pleuropneumoniae serotype 3 (strain JL03) protein is DNA ligase.